We begin with the raw amino-acid sequence, 192 residues long: MPHFCLVASTSMLSASYDVSQDLSSALYTSSSTYKYESASARIDCLSTTCTQVLKTLEIEHKLSMKVFATLFLLAASATAALAAVPAPNAGCSQPGQYCNGGTFLCCNNRQCNNNVRVPYSVPGYARNPSYAFSRHHGRNGSSQLSMSIWDALEELLVSGGDWVSYNQWAKYEAGARVVGTIHERRGMNEID.

3 disulfides stabilise this stretch: cysteine 45–cysteine 106, cysteine 50–cysteine 99, and cysteine 107–cysteine 112.

This sequence belongs to the fungal hydrophobin family. In terms of assembly, self-assembles to form functional amyloid fibrils called rodlets. Self-assembly into fibrillar rodlets occurs spontaneously at hydrophobic:hydrophilic interfaces and the rodlets further associate laterally to form amphipathic monolayers.

Functionally, aerial growth, conidiation, and dispersal of filamentous fungi in the environment rely upon a capability of their secreting small amphipathic proteins called hydrophobins (HPBs) with low sequence identity. Class I can self-assemble into an outermost layer of rodlet bundles on aerial cell surfaces, conferring cellular hydrophobicity that supports fungal growth, development and dispersal; whereas Class II form highly ordered films at water-air interfaces through intermolecular interactions but contribute nothing to the rodlet structure. RodD is a an hydrophobin-like protein that, unlike rodA, is not required for rodlet formation. This Aspergillus fumigatus (strain ATCC MYA-4609 / CBS 101355 / FGSC A1100 / Af293) (Neosartorya fumigata) protein is Hydrophobin-like protein rodD.